We begin with the raw amino-acid sequence, 478 residues long: MKIWLSGIYEFFLRYKNTWAEVWKIRKELDHPNRKKDESEFLPAHLDLIETPVSKKPRLIAYLIMLFLVVAIVLASVSKVEIVATAPGKLTFSGRSKEIKPIENAIVQEIFVKDGQFVEKGQLLVSLTALGSDADIKKTMASLSLAKLENYRYQTLLTAIEKESLPVIDLSRTEFKDSSEEDRLRIKHLIEEQYTTWQKQKTQKTLAYKRKEAEKQTIFAYVRKYEGATRIEQEKFKDFKALYKQKSLSKHELLAQENKLIEAQNELAVYRSKLNELENDLLNVKEELELITQFFKSDVLEKLKQHIENERQLRLELEKNNQRRQASMIRAPVSGTVQQLKIHTIGGVVTTAETLMIIVPEDDVLEATALVPNKDIGFVAAGQEVIIKVETFPYTRYGYLTGRIKHISPDAIEQPNVGLVFNATIAIDRKNLTSPDGRKIDLSSGMTITAEIKTGERSVMSYLLSPLEESVTESLRER.

The Cytoplasmic segment spans residues 1 to 59; that stretch reads MKIWLSGIYEFFLRYKNTWAEVWKIRKELDHPNRKKDESEFLPAHLDLIETPVSKKPRL. Residues 60–80 form a helical membrane-spanning segment; that stretch reads IAYLIMLFLVVAIVLASVSKV. The Periplasmic portion of the chain corresponds to 81–478; it reads EIVATAPGKL…ESVTESLRER (398 aa).

It belongs to the membrane fusion protein (MFP) (TC 8.A.1) family.

The protein resides in the cell inner membrane. Involved in the transport of the Leukotoxin. The sequence is that of Leukotoxin secretion protein D (lktD) from Mannheimia haemolytica (Pasteurella haemolytica).